The sequence spans 88 residues: RNA-binding protein Hfq (88 aa).

The region spanning 9–68 (DPFLNALRRERIPVSIYLVNGIKLQGQIESFDQFVILLKNTVNQMVYKHAISTVVPARAV) is the Sm domain. The disordered stretch occupies residues 66–88 (RAVSHHSGEQQRAPSDRPEKTED). The segment covering 71 to 88 (HSGEQQRAPSDRPEKTED) has biased composition (basic and acidic residues).

The protein belongs to the Hfq family. As to quaternary structure, homohexamer.

RNA chaperone that binds small regulatory RNA (sRNAs) and mRNAs to facilitate mRNA translational regulation in response to envelope stress, environmental stress and changes in metabolite concentrations. Also binds with high specificity to tRNAs. This is RNA-binding protein Hfq from Vibrio atlanticus (strain LGP32) (Vibrio splendidus (strain Mel32)).